The sequence spans 429 residues: MSAIVDIIGREVLDSRGNPTVECDVLLESGVMGRAAVPSGASTGSREAIELRDGDKSRYLGKGVLKAVEHINTEISEAIMGLDASEQAFLDRTLIDLDGTENKSRLGANAMLAVSMAVAKAAAEEAGLPLYRYFGGSGAMQMPVPMMNIVNGGAHANNSLDIQEFMVMPVSATSFREALRCGAEVFHALKKILADKGMSTAVGDEGGFAPNFSSNEECLNTIVQAVEKAGYRMGEDVLLALDCAASEFYHEAEDVYVLEGEGLKLSSTQFADYLANLCDKFPIVSIEDGMAEGDWDGWKTLTDKLGKRVQLVGDDLFVTNTKILKEGIDKGIGNSILIKINQIGTLTETFAAIEMAKRAGYTAVISHRSGETEDSTIADIAVGTNAGQIKTGSLSRSDRISKYNQLLRIEEDLGDIASYPGKSAFYNLR.

Gln163 serves as a coordination point for (2R)-2-phosphoglycerate. Catalysis depends on Glu205, which acts as the Proton donor. Residues Asp242, Glu287, and Asp314 each contribute to the Mg(2+) site. (2R)-2-phosphoglycerate-binding residues include Lys339, Arg368, Ser369, and Lys390. The Proton acceptor role is filled by Lys339.

This sequence belongs to the enolase family. It depends on Mg(2+) as a cofactor.

The protein localises to the cytoplasm. The protein resides in the secreted. It localises to the cell surface. The catalysed reaction is (2R)-2-phosphoglycerate = phosphoenolpyruvate + H2O. The protein operates within carbohydrate degradation; glycolysis; pyruvate from D-glyceraldehyde 3-phosphate: step 4/5. Catalyzes the reversible conversion of 2-phosphoglycerate (2-PG) into phosphoenolpyruvate (PEP). It is essential for the degradation of carbohydrates via glycolysis. The sequence is that of Enolase from Cupriavidus pinatubonensis (strain JMP 134 / LMG 1197) (Cupriavidus necator (strain JMP 134)).